A 276-amino-acid polypeptide reads, in one-letter code: Octanoyltransferase LipM (276 aa).

A BPL/LPL catalytic domain is found at 31 to 246; the sequence is GLIPPTIRFY…GFEKGLSIKL (216 aa). The active-site Acyl-thioester intermediate is Cys148.

Belongs to the octanoyltransferase LipM family. Monomer.

The enzyme catalyses octanoyl-[ACP] + L-lysyl-[protein] = N(6)-octanoyl-L-lysyl-[protein] + holo-[ACP] + H(+). Its pathway is protein modification; protein lipoylation via endogenous pathway; protein N(6)-(lipoyl)lysine from octanoyl-[acyl-carrier-protein]. Its function is as follows. Catalyzes the transfer of endogenously produced octanoic acid from octanoyl-acyl-carrier-protein onto the lipoyl domain of GcvH, an intermediate carrier during protein lipoylation. The chain is Octanoyltransferase LipM from Halalkalibacterium halodurans (strain ATCC BAA-125 / DSM 18197 / FERM 7344 / JCM 9153 / C-125) (Bacillus halodurans).